A 513-amino-acid chain; its full sequence is Ribonuclease Y (513 aa).

The chain crosses the membrane as a helical span at residues 6–26 (YIIIAVVIIIICVILGLYVVD). Residues 203-288 (TVHVVNLPND…EMVEKAKKEV (86 aa)) enclose the KH domain. The 94-residue stretch at 329–422 (VLKHSIEVSH…VQAADAISAA (94 aa)) folds into the HD domain.

It belongs to the RNase Y family.

It localises to the cell membrane. Endoribonuclease that initiates mRNA decay. This is Ribonuclease Y from Clostridium botulinum (strain Langeland / NCTC 10281 / Type F).